Consider the following 189-residue polypeptide: GMP synthase [glutamine-hydrolyzing] subunit A (189 aa).

Residues 5–189 enclose the Glutamine amidotransferase type-1 domain; that stretch reads KILVVNNYGQ…MNFFEVCDLY (185 aa). Residue cysteine 79 is the Nucleophile of the active site. Catalysis depends on residues histidine 166 and glutamate 168.

As to quaternary structure, heterodimer composed of a glutamine amidotransferase subunit (A) and a GMP-binding subunit (B).

The catalysed reaction is XMP + L-glutamine + ATP + H2O = GMP + L-glutamate + AMP + diphosphate + 2 H(+). It participates in purine metabolism; GMP biosynthesis; GMP from XMP (L-Gln route): step 1/1. Its function is as follows. Catalyzes the synthesis of GMP from XMP. This is GMP synthase [glutamine-hydrolyzing] subunit A from Methanosarcina mazei (strain ATCC BAA-159 / DSM 3647 / Goe1 / Go1 / JCM 11833 / OCM 88) (Methanosarcina frisia).